A 213-amino-acid polypeptide reads, in one-letter code: Pyrrolidone-carboxylate peptidase (213 aa).

Catalysis depends on residues Glu80, Cys143, and His166.

Belongs to the peptidase C15 family. As to quaternary structure, homotetramer.

It is found in the cytoplasm. It carries out the reaction Release of an N-terminal pyroglutamyl group from a polypeptide, the second amino acid generally not being Pro.. Functionally, removes 5-oxoproline from various penultimate amino acid residues except L-proline. This Clavibacter michiganensis subsp. michiganensis (strain NCPPB 382) protein is Pyrrolidone-carboxylate peptidase.